The primary structure comprises 441 residues: D-inositol 3-phosphate glycosyltransferase (441 aa).

Histidine 38 serves as a coordination point for 1D-myo-inositol 3-phosphate. Residues 44 to 45 (QP) and glycine 52 each bind UDP-N-acetyl-alpha-D-glucosamine. 1D-myo-inositol 3-phosphate contacts are provided by residues 49 to 54 (DAGGMN), lysine 107, tyrosine 140, threonine 164, and arginine 184. Arginine 258, lysine 263, and glutamine 316 together coordinate UDP-N-acetyl-alpha-D-glucosamine. Positions 325, 326, and 328 each coordinate Mg(2+). UDP-N-acetyl-alpha-D-glucosamine-binding residues include glutamate 338 and glutamate 346. Threonine 352 contributes to the Mg(2+) binding site.

Belongs to the glycosyltransferase group 1 family. MshA subfamily. Homodimer.

It catalyses the reaction 1D-myo-inositol 3-phosphate + UDP-N-acetyl-alpha-D-glucosamine = 1D-myo-inositol 2-acetamido-2-deoxy-alpha-D-glucopyranoside 3-phosphate + UDP + H(+). In terms of biological role, catalyzes the transfer of a N-acetyl-glucosamine moiety to 1D-myo-inositol 3-phosphate to produce 1D-myo-inositol 2-acetamido-2-deoxy-glucopyranoside 3-phosphate in the mycothiol biosynthesis pathway. The chain is D-inositol 3-phosphate glycosyltransferase from Mycolicibacterium paratuberculosis (strain ATCC BAA-968 / K-10) (Mycobacterium paratuberculosis).